The chain runs to 315 residues: Methionyl-tRNA formyltransferase (315 aa).

A (6S)-5,6,7,8-tetrahydrofolate-binding site is contributed by 112–115; that stretch reads SLLP.

This sequence belongs to the Fmt family.

It carries out the reaction L-methionyl-tRNA(fMet) + (6R)-10-formyltetrahydrofolate = N-formyl-L-methionyl-tRNA(fMet) + (6S)-5,6,7,8-tetrahydrofolate + H(+). In terms of biological role, attaches a formyl group to the free amino group of methionyl-tRNA(fMet). The formyl group appears to play a dual role in the initiator identity of N-formylmethionyl-tRNA by promoting its recognition by IF2 and preventing the misappropriation of this tRNA by the elongation apparatus. The chain is Methionyl-tRNA formyltransferase from Rhizobium rhizogenes (strain K84 / ATCC BAA-868) (Agrobacterium radiobacter).